A 2559-amino-acid polypeptide reads, in one-letter code: Ubiquitin carboxyl-terminal hydrolase 9X (2559 aa).

The span at 1-44 shows a compositional bias: polar residues; sequence MTATTRGSPVGGNDNQGQAPDGQSQPPLQQNQTSSPDSSNENSP. The interval 1–64 is disordered; that stretch reads MTATTRGSPV…DAPPQIEDEE (64 aa). Phosphoserine occurs at positions 374, 375, and 588. The disordered stretch occupies residues 967-999; sequence QISSNMPSSPDSSSDSSTGSPGNHGNHYSDGPN. Over residues 969-989 the composition is skewed to low complexity; sequence SSNMPSSPDSSSDSSTGSPGN. Residues 1557-1956 enclose the USP domain; sequence VGLKNAGATC…NAYILFYERM (400 aa). C1566 (nucleophile) is an active-site residue. The tract at residues 1592 to 1633 is disordered; it reads GSDVDDDMSGDEKQDNESNVDPRDDVFGYPQQFEDKPPLSKT. S1600 is subject to Phosphoserine. 2 stretches are compositionally biased toward basic and acidic residues: residues 1601-1617 and 1624-1633; these read GDEK…RDDV and FEDKPPLSKT. C1727, H1729, C1771, and C1774 together coordinate Zn(2+). H1879 (proton acceptor) is an active-site residue. At S2443 the chain carries Phosphoserine. Acidic residues predominate over residues 2475–2484; the sequence is PEEEPDDQDA. The interval 2475-2559 is disordered; the sequence is PEEEPDDQDA…QTKGSVKCTY (85 aa). Polar residues-rich tracts occupy residues 2503–2513 and 2527–2537; these read PGSQYQQNNHV and NNPQRTGQRAQ. Y2540 bears the Phosphotyrosine mark. Position 2547 is a phosphoserine (S2547). At T2551 the chain carries Phosphothreonine.

This sequence belongs to the peptidase C19 family. Interacts with SMAD4, MARK4, NUAK1 and BIRC5/survivin. Interacts with DCX. Interacts with OTUD4 and USP7; the interaction is direct. As to expression, highest levels in liver and brain with expression also detected in heart, muscle, spleen and kidney (at protein leve). Ubiquitously expressed in adult tissues.

The protein resides in the cytoplasm. Its subcellular location is the cytosol. The protein localises to the cell projection. It localises to the growth cone. It is found in the cytoskeleton. The protein resides in the cilium axoneme. The enzyme catalyses Thiol-dependent hydrolysis of ester, thioester, amide, peptide and isopeptide bonds formed by the C-terminal Gly of ubiquitin (a 76-residue protein attached to proteins as an intracellular targeting signal).. Its function is as follows. Deubiquitinase involved both in the processing of ubiquitin precursors and of ubiquitinated proteins. May therefore play an important regulatory role at the level of protein turnover by preventing degradation of proteins through the removal of conjugated ubiquitin. Specifically hydrolyzes 'Lys-11'-, followed by 'Lys-63'-, 'Lys-48'- and 'Lys-6'-linked polyubiquitins chains. Essential component of TGF-beta/BMP signaling cascade. Specifically deubiquitinates monoubiquitinated SMAD4, opposing the activity of E3 ubiquitin-protein ligase TRIM33. Deubiquitinates alkylation repair enzyme ALKBH3. OTUD4 recruits USP7 and USP9X to stabilize ALKBH3, thereby promoting the repair of alkylated DNA lesions. Deubiquitinates RNA demethylase enzyme ALKBH5, promoting its stability. Deubiquitinates mTORC2 complex component RICTOR at 'Lys-294' by removing 'Lys-63'-linked polyubiquitin chains, stabilizing RICTOR and enhancing its binding to MTOR, thus promoting mTORC2 complex assembly. Regulates chromosome alignment and segregation in mitosis by regulating the localization of BIRC5/survivin to mitotic centromeres. Involved in axonal growth and neuronal cell migration. Regulates cellular clock function by enhancing the protein stability and transcriptional activity of the core circadian protein BMAL1 via its deubiquitinating activity. Acts as a regulator of peroxisome import by mediating deubiquitination of PEX5: specifically deubiquitinates PEX5 monoubiquitinated at 'Cys-11' following its retrotranslocation into the cytosol, resetting PEX5 for a subsequent import cycle. Deubiquitinates PEG10. Inhibits the activation of the Hippo signaling pathway via deubiquitination of AMOTL2 at 'Lys-337' and 'Lys-404' which prohibits its interaction with and activation of LATS2. Loss of LATS2 activation and subsequent loss of YAP1 phosphorylation results in an increase in YAP1-driven transcription of target genes. The chain is Ubiquitin carboxyl-terminal hydrolase 9X from Mus musculus (Mouse).